Consider the following 363-residue polypeptide: MIHQKMIGKTRRLDFTTLFFLITLSLIVNSFIFNNLLIICIFLVFFSICILITNYGLKIIKQLNLLQNIRDTGPSFHFNKKNTPTMGGIFIILPLLLLLLIVNHYFYSMGIILLFFGSLSFFIIGFLDDYLSIKKKKNIGLRSTQKFILQSLISILFIVLAYQNGYINSLITVSNNWAIDTNIVIFPICFVTLVGLSNAVNLTDGLDGLASGCGSIVFYGLGTEIFIKGQQELIIYGLIAYAMSGLCVGFLKFNKYPAKIFMGDTGSLTIGATLGYISILTNSYFTLFIISGIFVIEALSVIIQVSFFKITKKIFKRGKRVFLMTPIHHHFELSGMKEEKIVENFWKINILLVILGIVLKINL.

Transmembrane regions (helical) follow at residues 15–33, 82–102, 106–126, 147–167, 183–203, 207–227, 233–253, 260–280, 285–305, and 341–361; these read FTTL…SFIF, NTPT…LLIV, FYSM…IIGF, FILQ…NGYI, IVIF…VNLT, DGLA…EIFI, LIIY…FLKF, IFMG…ISIL, FTLF…IIQV, and IVEN…VLKI.

It belongs to the glycosyltransferase 4 family. MraY subfamily. It depends on Mg(2+) as a cofactor.

The protein localises to the cell inner membrane. It catalyses the reaction UDP-N-acetyl-alpha-D-muramoyl-L-alanyl-gamma-D-glutamyl-meso-2,6-diaminopimeloyl-D-alanyl-D-alanine + di-trans,octa-cis-undecaprenyl phosphate = di-trans,octa-cis-undecaprenyl diphospho-N-acetyl-alpha-D-muramoyl-L-alanyl-D-glutamyl-meso-2,6-diaminopimeloyl-D-alanyl-D-alanine + UMP. It functions in the pathway cell wall biogenesis; peptidoglycan biosynthesis. Catalyzes the initial step of the lipid cycle reactions in the biosynthesis of the cell wall peptidoglycan: transfers peptidoglycan precursor phospho-MurNAc-pentapeptide from UDP-MurNAc-pentapeptide onto the lipid carrier undecaprenyl phosphate, yielding undecaprenyl-pyrophosphoryl-MurNAc-pentapeptide, known as lipid I. This Prochlorococcus marinus (strain MIT 9515) protein is Phospho-N-acetylmuramoyl-pentapeptide-transferase.